Reading from the N-terminus, the 278-residue chain is Elongation factor Ts (278 aa).

The tract at residues 79-82 is involved in Mg(2+) ion dislocation from EF-Tu; sequence TDFV.

Belongs to the EF-Ts family.

It is found in the cytoplasm. Its function is as follows. Associates with the EF-Tu.GDP complex and induces the exchange of GDP to GTP. It remains bound to the aminoacyl-tRNA.EF-Tu.GTP complex up to the GTP hydrolysis stage on the ribosome. The sequence is that of Elongation factor Ts from Borrelia recurrentis (strain A1).